Consider the following 217-residue polypeptide: Ras-related protein RABA5b (217 aa).

Residue 19 to 26 coordinates GTP; that stretch reads GDSAVGKS. The Effector region signature appears at 41-49; that stretch reads SKATIGVEF. GTP contacts are provided by residues 67 to 71, 125 to 128, and 155 to 156; these read DTAGQ, NKCD, and SA. 2 S-geranylgeranyl cysteine lipidation sites follow: C214 and C215.

This sequence belongs to the small GTPase superfamily. Rab family.

It localises to the cell membrane. Intracellular vesicle trafficking and protein transport. This Arabidopsis thaliana (Mouse-ear cress) protein is Ras-related protein RABA5b (RABA5B).